Reading from the N-terminus, the 149-residue chain is Small ribosomal subunit protein uS19w (149 aa).

The protein belongs to the universal ribosomal protein uS19 family.

The protein resides in the cytoplasm. The chain is Small ribosomal subunit protein uS19w (RPS15E) from Arabidopsis thaliana (Mouse-ear cress).